Reading from the N-terminus, the 145-residue chain is D-aminoacyl-tRNA deacylase (145 aa).

The short motif at 137–138 (GP) is the Gly-cisPro motif, important for rejection of L-amino acids element.

Belongs to the DTD family. As to quaternary structure, homodimer.

Its subcellular location is the cytoplasm. The catalysed reaction is glycyl-tRNA(Ala) + H2O = tRNA(Ala) + glycine + H(+). The enzyme catalyses a D-aminoacyl-tRNA + H2O = a tRNA + a D-alpha-amino acid + H(+). Its function is as follows. An aminoacyl-tRNA editing enzyme that deacylates mischarged D-aminoacyl-tRNAs. Also deacylates mischarged glycyl-tRNA(Ala), protecting cells against glycine mischarging by AlaRS. Acts via tRNA-based rather than protein-based catalysis; rejects L-amino acids rather than detecting D-amino acids in the active site. By recycling D-aminoacyl-tRNA to D-amino acids and free tRNA molecules, this enzyme counteracts the toxicity associated with the formation of D-aminoacyl-tRNA entities in vivo and helps enforce protein L-homochirality. This Pectobacterium atrosepticum (strain SCRI 1043 / ATCC BAA-672) (Erwinia carotovora subsp. atroseptica) protein is D-aminoacyl-tRNA deacylase.